Here is a 322-residue protein sequence, read N- to C-terminus: 3-hydroxyacyl-CoA dehydrogenase FVEG_12628 (322 aa).

Residues Ile5 to Leu25 traverse the membrane as a helical segment. Catalysis depends on Glu151, which acts as the For hydroxyacyl-coenzyme A dehydrogenase activity.

It belongs to the 3-hydroxyacyl-CoA dehydrogenase family.

It localises to the membrane. Its function is as follows. 3-hydroxyacyl-CoA dehydrogenase; part of the Fusarium detoxification of benzoxazolinone cluster 2 (FDB2) involved in the degradation of benzoxazolinones produced by the host plant. Maize, wheat, and rye produce the 2 benzoxazinone phytoanticipins 2,4-dihy-droxy-7-methoxy-1,4-benzoxazin-3-one (DIMBOA) and 2,4-dihydroxy-1,4-benzoxazin-3-one (DIBOA) that, due to their inherent instability once released, spontaneously degrade to the more stable corresponding benzoxazolinones, 6-methoxy-2-benzoxazolinone (MBOA) and 2-benzoxazolinone (BOA), respectively. The first step in the detoxification of benzoxazolinones involves the hydrolysis of the cyclic ester bond of benzoxazolinones by the FDB1 cluster gamma-lactamase MBL1 to aminophenols. MBL1 is able to convert BOA into 2-aminophenol (2-AP), as well as MBOA into 5-methoxy-2-aminophenol (2-AMP). The FDB2 cluster N-malonyltransferase FDB2/NAT1 then metabolizes aminophenols via N-malonylation to non-toxic malonamic acids. FDB2/NAT1 converts 2-AP into N-(2-hydroxyphenyl) malonamic acid (HPMA) and 2-AMP into N-(2-hydroxy-4-methoxyphenyl) malonamic acid (HMPMA). The duplicated dienlactone hydrolases DLH1 and DLH2 may provide redundant function for hydrolyzing the lactone moiety in the BOA molecule. The roles of the amidases an other enzymes encoded by the 2 FDB clusters have not been identified so far. In Gibberella moniliformis (strain M3125 / FGSC 7600) (Maize ear and stalk rot fungus), this protein is 3-hydroxyacyl-CoA dehydrogenase FVEG_12628.